Here is a 162-residue protein sequence, read N- to C-terminus: Cyclic pyranopterin monophosphate synthase (162 aa).

Residues 75 to 77 (MCH) and 115 to 116 (ME) contribute to the substrate site. Asp130 is an active-site residue.

This sequence belongs to the MoaC family. In terms of assembly, homohexamer; trimer of dimers.

It catalyses the reaction (8S)-3',8-cyclo-7,8-dihydroguanosine 5'-triphosphate = cyclic pyranopterin phosphate + diphosphate. Its pathway is cofactor biosynthesis; molybdopterin biosynthesis. Catalyzes the conversion of (8S)-3',8-cyclo-7,8-dihydroguanosine 5'-triphosphate to cyclic pyranopterin monophosphate (cPMP). The sequence is that of Cyclic pyranopterin monophosphate synthase from Geobacillus kaustophilus (strain HTA426).